A 209-amino-acid polypeptide reads, in one-letter code: Guanylate kinase (209 aa).

In terms of domain architecture, Guanylate kinase-like spans 7–185; that stretch reads GNLYIVAAPS…AAMELQSIVI (179 aa). Residue 14 to 21 coordinates ATP; it reads APSGGGKT.

This sequence belongs to the guanylate kinase family.

Its subcellular location is the cytoplasm. The enzyme catalyses GMP + ATP = GDP + ADP. Essential for recycling GMP and indirectly, cGMP. The polypeptide is Guanylate kinase (Legionella pneumophila (strain Lens)).